Here is an 82-residue protein sequence, read N- to C-terminus: Ice-structuring protein B (82 aa).

The signal sequence occupies residues 1-23; the sequence is MALSLFTVGQLIFLFWTMRITEA. The propeptide at 24–44 is removed by a dipeptidylpeptidase; it reads RPDPAAKAAPAAAAVPAAAAP. Arginine 81 carries the arginine amide modification.

The protein belongs to the type-I AFP family. Amidated. As to expression, detected in liver (at protein level).

It is found in the secreted. Its subcellular location is the extracellular space. Functionally, contributes to protect fish blood from freezing at subzero sea water temperatures. Lowers the blood freezing point. Binds to nascent ice crystals and prevents further growth. The chain is Ice-structuring protein B from Pseudopleuronectes americanus (Winter flounder).